A 119-amino-acid chain; its full sequence is MPTQHTFSRELRLLTPEHFKRVFAEPVRAASPQITLLACPNTLEHPRLGLAVPKKALKRAVWRNRVKRVVRESFRLNQANLPAIDIVVIAKAGVKEMDNEELFKLLEKLWRTLSRRCNG.

The protein belongs to the RnpA family. As to quaternary structure, consists of a catalytic RNA component (M1 or rnpB) and a protein subunit.

It catalyses the reaction Endonucleolytic cleavage of RNA, removing 5'-extranucleotides from tRNA precursor.. Functionally, RNaseP catalyzes the removal of the 5'-leader sequence from pre-tRNA to produce the mature 5'-terminus. It can also cleave other RNA substrates such as 4.5S RNA. The protein component plays an auxiliary but essential role in vivo by binding to the 5'-leader sequence and broadening the substrate specificity of the ribozyme. In Aeromonas hydrophila subsp. hydrophila (strain ATCC 7966 / DSM 30187 / BCRC 13018 / CCUG 14551 / JCM 1027 / KCTC 2358 / NCIMB 9240 / NCTC 8049), this protein is Ribonuclease P protein component.